A 499-amino-acid polypeptide reads, in one-letter code: Glycerol kinase (499 aa).

An ADP-binding site is contributed by T12. Residues T12, T13, and S14 each coordinate ATP. Residue T12 participates in sn-glycerol 3-phosphate binding. Residue R16 coordinates ADP. Positions 82, 83, 134, and 245 each coordinate sn-glycerol 3-phosphate. Glycerol is bound by residues R82, E83, Y134, D245, and Q246. 2 residues coordinate ADP: T267 and G311. ATP contacts are provided by T267, G311, Q315, and G412. 2 residues coordinate ADP: G412 and N416.

It belongs to the FGGY kinase family.

It carries out the reaction glycerol + ATP = sn-glycerol 3-phosphate + ADP + H(+). Its pathway is polyol metabolism; glycerol degradation via glycerol kinase pathway; sn-glycerol 3-phosphate from glycerol: step 1/1. With respect to regulation, inhibited by fructose 1,6-bisphosphate (FBP). Key enzyme in the regulation of glycerol uptake and metabolism. Catalyzes the phosphorylation of glycerol to yield sn-glycerol 3-phosphate. This Brucella anthropi (strain ATCC 49188 / DSM 6882 / CCUG 24695 / JCM 21032 / LMG 3331 / NBRC 15819 / NCTC 12168 / Alc 37) (Ochrobactrum anthropi) protein is Glycerol kinase.